A 304-amino-acid polypeptide reads, in one-letter code: Polyisoprenyl-teichoic acid--peptidoglycan teichoic acid transferase TagU (304 aa).

Residues 1–4 (MKKK) lie on the Cytoplasmic side of the membrane. The helical; Signal-anchor for type II membrane protein transmembrane segment at 5 to 25 (ILFWILGIIGILIIGGGAYAY) threads the bilayer. The Extracellular segment spans residues 26 to 304 (SIYSSVSKTL…KLRAHLEVTK (279 aa)).

It belongs to the LytR/CpsA/Psr (LCP) family.

The protein resides in the cell membrane. The protein operates within cell wall biogenesis. In terms of biological role, may catalyze the final step in cell wall teichoic acid biosynthesis, the transfer of the anionic cell wall polymers (APs) from their lipid-linked precursor to the cell wall peptidoglycan (PG). The protein is Polyisoprenyl-teichoic acid--peptidoglycan teichoic acid transferase TagU of Bacillus cereus (strain ATCC 14579 / DSM 31 / CCUG 7414 / JCM 2152 / NBRC 15305 / NCIMB 9373 / NCTC 2599 / NRRL B-3711).